The chain runs to 177 residues: Small ribosomal subunit protein uS5 (177 aa).

Residues 19 to 82 form the S5 DRBM domain; it reads FIEKLVAIKR…DQAQKQMIKV (64 aa).

The protein belongs to the universal ribosomal protein uS5 family. Part of the 30S ribosomal subunit. Contacts proteins S4 and S8.

With S4 and S12 plays an important role in translational accuracy. In terms of biological role, located at the back of the 30S subunit body where it stabilizes the conformation of the head with respect to the body. This chain is Small ribosomal subunit protein uS5, found in Magnetococcus marinus (strain ATCC BAA-1437 / JCM 17883 / MC-1).